Consider the following 166-residue polypeptide: Gem-associated protein 6 (166 aa).

In terms of domain architecture, Sm spans 4–73 (WMKKSPLEWE…VQTVETISEG (70 aa)). In terms of domain architecture, AD spans 68-166 (ETISEGDHRV…LIQGHLSASQ (99 aa)). 2 positions are modified to phosphoserine: S94 and S165.

Part of the core SMN complex that contains SMN1, GEMIN2/SIP1, DDX20/GEMIN3, GEMIN4, GEMIN5, GEMIN6, GEMIN7, GEMIN8 and STRAP/UNRIP. Part of the SMN-Sm complex that contains SMN1, GEMIN2/SIP1, DDX20/GEMIN3, GEMIN4, GEMIN5, GEMIN6, GEMIN7, GEMIN8, STRAP/UNRIP and the Sm proteins SNRPB, SNRPD1, SNRPD2, SNRPD3, SNRPE, SNRPF and SNRPG. Interacts with GEMIN7; the interaction is direct. Interacts with GEMIN8; the interaction is direct. Interacts with SNRPB, SNRPD2, SNRPD3 and SNRPE; the interaction is direct.

The protein localises to the nucleus. It is found in the nucleoplasm. Its subcellular location is the gem. The protein resides in the cytoplasm. Its function is as follows. The SMN complex catalyzes the assembly of small nuclear ribonucleoproteins (snRNPs), the building blocks of the spliceosome, and thereby plays an important role in the splicing of cellular pre-mRNAs. Most spliceosomal snRNPs contain a common set of Sm proteins SNRPB, SNRPD1, SNRPD2, SNRPD3, SNRPE, SNRPF and SNRPG that assemble in a heptameric protein ring on the Sm site of the small nuclear RNA to form the core snRNP (Sm core). In the cytosol, the Sm proteins SNRPD1, SNRPD2, SNRPE, SNRPF and SNRPG are trapped in an inactive 6S pICln-Sm complex by the chaperone CLNS1A that controls the assembly of the core snRNP. To assemble core snRNPs, the SMN complex accepts the trapped 5Sm proteins from CLNS1A forming an intermediate. Binding of snRNA inside 5Sm triggers eviction of the SMN complex, thereby allowing binding of SNRPD3 and SNRPB to complete assembly of the core snRNP. This is Gem-associated protein 6 (Gemin6) from Mus musculus (Mouse).